Consider the following 287-residue polypeptide: Putative holocytochrome-c1 synthase (287 aa).

Over residues 1–12 the composition is skewed to polar residues; the sequence is MRGFGSDSSQAS. Disordered regions lie at residues 1-63 and 81-100; these read MRGF…QPSS and QSQS…SAPL. Composition is skewed to low complexity over residues 31-63 and 81-92; these read QARA…QPSS and QSQSANSTQQAQ.

This sequence belongs to the cytochrome c-type heme lyase family.

It localises to the mitochondrion inner membrane. The enzyme catalyses holo-[cytochrome c] = apo-[cytochrome c] + heme b. Probable lyase that catalyzes the covalent linking of the heme group to the cytochrome C apoprotein to produce the mature functional cytochrome. The chain is Putative holocytochrome-c1 synthase from Chaetomium thermophilum (strain DSM 1495 / CBS 144.50 / IMI 039719) (Thermochaetoides thermophila).